A 445-amino-acid chain; its full sequence is Enolase (445 aa).

His165 and Glu174 together coordinate substrate. Glu217 serves as the catalytic Proton donor. Asp252, Glu303, and Asp330 together coordinate Mg(2+). Substrate is bound by residues Glu303 and Asp330. Lys355 serves as the catalytic Proton acceptor. Substrate is bound by residues 382-385 (SHRS) and Lys406.

It belongs to the enolase family. Homodimer. Mg(2+) is required as a cofactor.

Its subcellular location is the cytoplasm. The catalysed reaction is (2R)-2-phosphoglycerate = phosphoenolpyruvate + H2O. It participates in carbohydrate degradation; glycolysis; pyruvate from D-glyceraldehyde 3-phosphate: step 4/5. This Eimeria tenella (Coccidian parasite) protein is Enolase (ENO).